Reading from the N-terminus, the 48-residue chain is Cuticle protein 5.1 (48 aa).

Component of the cuticle of migratory locust which contains more than 100 different structural proteins. In Locusta migratoria (Migratory locust), this protein is Cuticle protein 5.1.